A 263-amino-acid chain; its full sequence is MWDPDVYLAFADHRGRPFYDLVSRIGAKRARRVVDLGCGPGNLTRYLARRWPEAIIEAWDSSPQMVAAARERGIDATTGDLRTWKPKPDTDVVISSAALHWVPEHADLMVQWATELPHGSWIAVQVPGNFETPSHAVVRALARREPYAKLMRDIPFRVGAVVGSPASYAGLLMDAGCKVDAWETTYLHQLTGKNPVLEWITGTALVPVRERLDDVSWEQFRQELIPLLDDAYPPRSDGTTMFPFRRLFIVAEVGGARRSADVS.

It belongs to the methyltransferase superfamily. Tam family.

It is found in the cytoplasm. The catalysed reaction is trans-aconitate + S-adenosyl-L-methionine = (E)-3-(methoxycarbonyl)pent-2-enedioate + S-adenosyl-L-homocysteine. Catalyzes the S-adenosylmethionine monomethyl esterification of trans-aconitate. The protein is Trans-aconitate 2-methyltransferase of Mycobacterium marinum (strain ATCC BAA-535 / M).